Reading from the N-terminus, the 372-residue chain is Cytochrome b (372 aa).

The next 4 helical transmembrane spans lie at 25–45 (FGSM…FLAI), 69–90 (WIMQ…YTHI), 105–125 (WLSG…GYVL), and 170–190 (FFAL…VHII). Positions 75 and 89 each coordinate heme b. Positions 174 and 188 each coordinate heme b. His-193 is an a ubiquinone binding site. 4 consecutive transmembrane segments (helical) span residues 218-238 (YKDM…LSFS), 280-300 (LGGT…PFTH), 312-332 (LSQI…WTAS), and 339-358 (FITI…ILTP).

Belongs to the cytochrome b family. As to quaternary structure, the cytochrome bc1 complex contains 3 respiratory subunits (MT-CYB, CYC1 and UQCRFS1), 2 core proteins (UQCRC1 and UQCRC2) and probably 6 low-molecular weight proteins. Heme b is required as a cofactor.

It is found in the mitochondrion inner membrane. Its function is as follows. Component of the ubiquinol-cytochrome c reductase complex (complex III or cytochrome b-c1 complex) that is part of the mitochondrial respiratory chain. The b-c1 complex mediates electron transfer from ubiquinol to cytochrome c. Contributes to the generation of a proton gradient across the mitochondrial membrane that is then used for ATP synthesis. This chain is Cytochrome b (MT-CYB), found in Naja kaouthia (Monocled cobra).